The sequence spans 399 residues: MRCDRLWRDARLATMAGNGLGIVEDGVVAASEGRILYAGPAADAPAFDPDRAETLDGRWITPGLIDCHTHLVHAGDRAREFELRLAGASYEEIARAGGGIVSTMRATRDADEARLVELALPRLDALIAEGATTVEVKSGYGLTVADELKMLRAARRLGEARPVGIRATLLGAHALPPEYAGDADGYVDLVCREMIPAAAREGLADAVDAFCEGIGFTPAQTQRVFDAARAAGLPVKLHAEQLSNLHGAKLAAEAGALSADHLEHLDADGIAAMARAGTVATLLPGAYYFVRETKLPPVDGLRAAGVPIAIATDCNPGTSPLSSLLLTMNMGATLFRLTVDECLAGVTRNAARALGLQAEIGTLEPGKSCDLAIWDIERPAELVYRIGFNPLHTRIWKGL.

The Fe(3+) site is built by histidine 68 and histidine 70. Positions 68 and 70 each coordinate Zn(2+). Residues arginine 77, tyrosine 140, and histidine 173 each contribute to the 4-imidazolone-5-propanoate site. Tyrosine 140 is an N-formimidoyl-L-glutamate binding site. Histidine 238 serves as a coordination point for Fe(3+). Histidine 238 is a binding site for Zn(2+). Residue glutamine 241 participates in 4-imidazolone-5-propanoate binding. A Fe(3+)-binding site is contributed by aspartate 313. Aspartate 313 lines the Zn(2+) pocket. The N-formimidoyl-L-glutamate site is built by asparagine 315 and glycine 317. Threonine 318 lines the 4-imidazolone-5-propanoate pocket.

The protein belongs to the metallo-dependent hydrolases superfamily. HutI family. Zn(2+) is required as a cofactor. Fe(3+) serves as cofactor.

It is found in the cytoplasm. It carries out the reaction 4-imidazolone-5-propanoate + H2O = N-formimidoyl-L-glutamate. It functions in the pathway amino-acid degradation; L-histidine degradation into L-glutamate; N-formimidoyl-L-glutamate from L-histidine: step 3/3. Catalyzes the hydrolytic cleavage of the carbon-nitrogen bond in imidazolone-5-propanoate to yield N-formimidoyl-L-glutamate. It is the third step in the universal histidine degradation pathway. The protein is Imidazolonepropionase of Rhizorhabdus wittichii (strain DSM 6014 / CCUG 31198 / JCM 15750 / NBRC 105917 / EY 4224 / RW1) (Sphingomonas wittichii).